The following is a 116-amino-acid chain: MDDLMKDRIDLLIDYIMKHCLWQFHSRSWDRKRQNEGILTKTTQLLCDEPVDLGTPADKCYWVDAVCLADAYKSRYPWLKTMDKDDIKALMGALHERLDHLTITGSLNLELTDQHY.

Hexamer of two alpha, two beta, and two delta chains. Iron-sulfur cluster is required as a cofactor.

The catalysed reaction is N2 + 8 reduced [2Fe-2S]-[ferredoxin] + 16 ATP + 16 H2O = H2 + 8 oxidized [2Fe-2S]-[ferredoxin] + 2 NH4(+) + 16 ADP + 16 phosphate + 6 H(+). Functionally, the key enzymatic reactions in nitrogen fixation are catalyzed by the nitrogenase complex, which has 2 components: the iron protein (component 2) and a component 1 which is either a molybdenum-iron protein, a vanadium-iron, or an iron-iron protein. The protein is Nitrogenase iron-iron protein delta chain (anfG) of Rhodospirillum rubrum.